The chain runs to 498 residues: Galactose-1-phosphate uridylyltransferase (498 aa).

It belongs to the galactose-1-phosphate uridylyltransferase type 2 family.

It is found in the cytoplasm. It carries out the reaction alpha-D-galactose 1-phosphate + UDP-alpha-D-glucose = alpha-D-glucose 1-phosphate + UDP-alpha-D-galactose. It participates in carbohydrate metabolism; galactose metabolism. The protein is Galactose-1-phosphate uridylyltransferase of Clostridium perfringens (strain SM101 / Type A).